The sequence spans 22 residues: Chitin-binding protein 3 (22 aa).

Post-translationally, glycosylated; contains 2.5% carbohydrates.

In terms of biological role, chitin-binding protein. Has antifungal activity against F.solani, F.oxysporum, C.musae and C.gloesporoides but not against P.oligandrum. Depending on concentration the antifungal activity can be fungistatic or fungicidal. Inhibits both spore germination and mycelial growth in F.solani at a concentration of 0.1 mg/ml. Has antifungal activity against C.krusei, C.albicans, C.tropicalis and C.parapsilosis. Has no chitinase, beta-glucanase or hemagglutinating activity. Acts as a flocculent. This Moringa oleifera (Horseradish tree) protein is Chitin-binding protein 3.